A 398-amino-acid polypeptide reads, in one-letter code: MFELVDNVPQSPVIKVIGVGGGGGNAVNHMVKSSIEGVEFICANTDAQALKNIGARTILQLGTGVTKGLGAGANPEVGRQAALEDRERIAEVLQGTNMVFITTGMGGGTGTGAAPIIAEVAKEMGILTVAVVTRPFPFEGRKRMQIADEGIRMLAESVDSLITIPNEKLLTILGKDASLLSAFAKADDVLAGAVRGISDIIKRPGMINVDFADVRTVMGEMGMAMMGTGCASGPNRAREATEAAIRNPLLEDVNLQGARGILVNITAGPDLSLGEYSDVGSIIEAFASDHAMVKVGTVIDPDMRDELHVTVVATGLGARIEKPVKVVDNTLQTAQQAYEASNPAPVRQEQPAVNYRDLERPTVMRNQAHAGAAAAAKLNPQDDLDYLDIPAFLRRQAD.

GTP-binding positions include 21-25, 108-110, glutamate 139, arginine 143, and aspartate 187; these read GGGGN and GTG.

This sequence belongs to the FtsZ family. Homodimer. Polymerizes to form a dynamic ring structure in a strictly GTP-dependent manner. Interacts directly with several other division proteins.

It localises to the cytoplasm. Essential cell division protein that forms a contractile ring structure (Z ring) at the future cell division site. The regulation of the ring assembly controls the timing and the location of cell division. One of the functions of the FtsZ ring is to recruit other cell division proteins to the septum to produce a new cell wall between the dividing cells. Binds GTP and shows GTPase activity. In Pseudomonas putida (strain ATCC 47054 / DSM 6125 / CFBP 8728 / NCIMB 11950 / KT2440), this protein is Cell division protein FtsZ.